Consider the following 461-residue polypeptide: Cysteine--tRNA ligase (461 aa).

Position 30 (Cys-30) interacts with Zn(2+). The short motif at 32-42 (VTVYDLCHIGH) is the 'HIGH' region element. Zn(2+)-binding residues include Cys-211, His-236, and Glu-240. A 'KMSKS' region motif is present at residues 268-272 (KMSKS). Position 271 (Lys-271) interacts with ATP.

This sequence belongs to the class-I aminoacyl-tRNA synthetase family. As to quaternary structure, monomer. It depends on Zn(2+) as a cofactor.

It localises to the cytoplasm. The catalysed reaction is tRNA(Cys) + L-cysteine + ATP = L-cysteinyl-tRNA(Cys) + AMP + diphosphate. This chain is Cysteine--tRNA ligase, found in Shewanella sp. (strain MR-4).